Consider the following 409-residue polypeptide: Effector protein BipC (409 aa).

2 disordered regions span residues 268–287 and 330–396; these read RETGESVRHEIDPGGERMSD and SGGQ…VAND. Low complexity predominate over residues 360–369; the sequence is AQQTAMAAAS. Over residues 370 to 382 the composition is skewed to basic and acidic residues; it reads ARDEAAHRGRDAA.

Belongs to the SctB/SipC family.

The protein localises to the secreted. The protein is Effector protein BipC (bipC) of Burkholderia thailandensis (strain ATCC 700388 / DSM 13276 / CCUG 48851 / CIP 106301 / E264).